A 943-amino-acid chain; its full sequence is Protein translocase subunit SecA (943 aa).

Residues Q90, 108–112, and D509 contribute to the ATP site; that span reads GEGKT. The interval 534-576 is disordered; sequence KPDNEHKPPIPQQRSSKAGGGFASKSESISNKNSKSSGASLFP. Positions 556 to 570 are enriched in low complexity; sequence ASKSESISNKNSKSS.

Belongs to the SecA family. Monomer and homodimer. Part of the essential Sec protein translocation apparatus which comprises SecA, SecYEG and auxiliary proteins SecDF. Other proteins may also be involved.

The protein localises to the cell inner membrane. The protein resides in the cellular thylakoid membrane. It is found in the cytoplasm. It catalyses the reaction ATP + H2O + cellular proteinSide 1 = ADP + phosphate + cellular proteinSide 2.. In terms of biological role, part of the Sec protein translocase complex. Interacts with the SecYEG preprotein conducting channel. Has a central role in coupling the hydrolysis of ATP to the transfer of proteins into and across the cell membrane, serving as an ATP-driven molecular motor driving the stepwise translocation of polypeptide chains across the membrane. Its function is as follows. Probably participates in protein translocation into and across both the cytoplasmic and thylakoid membranes in cyanobacterial cells. This Prochlorococcus marinus (strain MIT 9515) protein is Protein translocase subunit SecA.